Here is a 332-residue protein sequence, read N- to C-terminus: Methionine synthase (332 aa).

3 residues coordinate Zn(2+): His-211, Cys-213, and Cys-296.

It belongs to the archaeal MetE family. The cofactor is Zn(2+).

It functions in the pathway amino-acid biosynthesis; L-methionine biosynthesis via de novo pathway. Its function is as follows. Catalyzes the transfer of a methyl group to L-homocysteine resulting in methionine formation. The physiological methyl donor is unknown. The polypeptide is Methionine synthase (Saccharolobus islandicus (strain Y.N.15.51 / Yellowstone #2) (Sulfolobus islandicus)).